Reading from the N-terminus, the 298-residue chain is MTDAPVISPLDQARILSEALPHMQRYDEETIVIKYGGHAMGAEDTAKAFARDIVLLEQTAVNPVVVHGGGPQIAQMLKRLGIKSEFAAGLRITDAATIEIVEMVLAGSINKQLVGYINEAGGKAVGLCGKDGNMVSATKATRTMVDPDSRIEEVIDLGFVGEPEKVDLTLLNQLIGHELIPVLAPLATSASGQTFNVNADTFAGAVAGALRAKRLLLLTDVPGVLDQNKKLIPELSIKDARKLIADGTISGGMIPKVETCIYALEQGVEGVVILDGKVPHAVLLELFTNQGTGTLIHK.

Substrate contacts are provided by residues 69-70 (GG), Arg-91, and Asn-196.

Belongs to the acetylglutamate kinase family. ArgB subfamily.

Its subcellular location is the cytoplasm. It catalyses the reaction N-acetyl-L-glutamate + ATP = N-acetyl-L-glutamyl 5-phosphate + ADP. It functions in the pathway amino-acid biosynthesis; L-arginine biosynthesis; N(2)-acetyl-L-ornithine from L-glutamate: step 2/4. Functionally, catalyzes the ATP-dependent phosphorylation of N-acetyl-L-glutamate. The protein is Acetylglutamate kinase of Rhodopseudomonas palustris (strain TIE-1).